The primary structure comprises 180 residues: ATP-dependent protease subunit HslV (180 aa).

Thr-7 is an active-site residue. Residues Gly-165, Cys-168, and Thr-171 each contribute to the Na(+) site.

It belongs to the peptidase T1B family. HslV subfamily. As to quaternary structure, a double ring-shaped homohexamer of HslV is capped on each side by a ring-shaped HslU homohexamer. The assembly of the HslU/HslV complex is dependent on binding of ATP.

It is found in the cytoplasm. It catalyses the reaction ATP-dependent cleavage of peptide bonds with broad specificity.. Its activity is regulated as follows. Allosterically activated by HslU binding. In terms of biological role, protease subunit of a proteasome-like degradation complex believed to be a general protein degrading machinery. The protein is ATP-dependent protease subunit HslV of Bacillus cereus (strain G9842).